Consider the following 175-residue polypeptide: Large ribosomal subunit protein uL22 (175 aa).

Residues 113 to 175 are disordered; sequence VESRPVKDQR…EASETKGGSD (63 aa). Low complexity predominate over residues 136-154; the sequence is KTAGRAPAKKAGASSGATK. Residues 166 to 175 are compositionally biased toward basic and acidic residues; sequence EASETKGGSD.

The protein belongs to the universal ribosomal protein uL22 family. As to quaternary structure, part of the 50S ribosomal subunit.

Its function is as follows. This protein binds specifically to 23S rRNA; its binding is stimulated by other ribosomal proteins, e.g. L4, L17, and L20. It is important during the early stages of 50S assembly. It makes multiple contacts with different domains of the 23S rRNA in the assembled 50S subunit and ribosome. Functionally, the globular domain of the protein is located near the polypeptide exit tunnel on the outside of the subunit, while an extended beta-hairpin is found that lines the wall of the exit tunnel in the center of the 70S ribosome. This Mycobacterium leprae (strain TN) protein is Large ribosomal subunit protein uL22.